The chain runs to 204 residues: Imidazoleglycerol-phosphate dehydratase (204 aa).

Belongs to the imidazoleglycerol-phosphate dehydratase family.

The protein localises to the cytoplasm. It catalyses the reaction D-erythro-1-(imidazol-4-yl)glycerol 3-phosphate = 3-(imidazol-4-yl)-2-oxopropyl phosphate + H2O. The protein operates within amino-acid biosynthesis; L-histidine biosynthesis; L-histidine from 5-phospho-alpha-D-ribose 1-diphosphate: step 6/9. The chain is Imidazoleglycerol-phosphate dehydratase from Rhodococcus erythropolis (strain PR4 / NBRC 100887).